The following is a 325-amino-acid chain: 5-dehydro-2-deoxygluconokinase (325 aa).

This sequence belongs to the carbohydrate kinase PfkB family.

The catalysed reaction is 5-dehydro-2-deoxy-D-gluconate + ATP = 6-phospho-5-dehydro-2-deoxy-D-gluconate + ADP + H(+). It participates in polyol metabolism; myo-inositol degradation into acetyl-CoA; acetyl-CoA from myo-inositol: step 5/7. Its function is as follows. Catalyzes the phosphorylation of 5-dehydro-2-deoxy-D-gluconate (2-deoxy-5-keto-D-gluconate or DKG) to 6-phospho-5-dehydro-2-deoxy-D-gluconate (DKGP). This is 5-dehydro-2-deoxygluconokinase from Bacillus licheniformis (strain ATCC 14580 / DSM 13 / JCM 2505 / CCUG 7422 / NBRC 12200 / NCIMB 9375 / NCTC 10341 / NRRL NRS-1264 / Gibson 46).